The following is a 354-amino-acid chain: MTALKNDRFLRALLKQPVDVTPVWMMRQAGRYLPEYRASRAKAGDFMSLCMNPQFACEVTLQPLDRYPLDAAILFSDILTIPDAMGLGLYFETGEGPRFKKVISTPADIEALPIPDPQKDLGYVMDAVSTIRRELNGRVPLIGFSGSPWTLATYMVEGGSSKDFRKTKAMAYDNPQALHLLLDKLAQSVTSYLNGQILAGAQAVQIFDTWGGNLSAAAYQEFSLAYMRKIVSGLIREHEGRKVPVILFTKNGGLWLESIAEAGADALGLDWTCEIGDARRRVGDRVALQGNMDPTVLYAKPEAIRQEVARILASYGQGTGHVFNLGHGITPEVDPEHAGVFINAVHELSAQYHQ.

Substrate-binding positions include 27-31 (RQAGR), D77, Y154, T209, and H327.

It belongs to the uroporphyrinogen decarboxylase family. As to quaternary structure, homodimer.

Its subcellular location is the cytoplasm. It carries out the reaction uroporphyrinogen III + 4 H(+) = coproporphyrinogen III + 4 CO2. The protein operates within porphyrin-containing compound metabolism; protoporphyrin-IX biosynthesis; coproporphyrinogen-III from 5-aminolevulinate: step 4/4. Functionally, catalyzes the decarboxylation of four acetate groups of uroporphyrinogen-III to yield coproporphyrinogen-III. The chain is Uroporphyrinogen decarboxylase from Pseudomonas putida (strain GB-1).